The sequence spans 239 residues: Apoptosis regulator Bcl-2 (239 aa).

The BH4 motif lies at 10–30 (DNREIVMKYIHYKLSQRGYEW). The segment at 39-85 (PPGAAPAPGIFSSQPGHTPHPAASRDPVARTSPLQTPAAPGAAAGPA) is disordered. At Thr-69 the chain carries Phosphothreonine; by MAPK8. Ser-70 carries the phosphoserine; by MAPK8 and PKC modification. Residues 75 to 85 (PAAPGAAAGPA) are compositionally biased toward low complexity. The residue at position 87 (Ser-87) is a Phosphoserine; by MAPK8. The required for interaction with SEPTIN4 isoform ARTS. Required XIAP-mediated ubiquitination and apoptosis stretch occupies residues 92 to 107 (VVHLTLRQAGDDFSRR). Residues 93–107 (VHLTLRQAGDDFSRR) carry the BH3 motif. A BH1 motif is present at residues 136–155 (ELFRDGVNWGRIVAFFEFGG). The BH2 signature appears at 187–202 (TWIQDNGGWDAFVELY). Residues 212–233 (FSWLSLKTLLSLALVGACITLG) traverse the membrane as a helical segment.

Belongs to the Bcl-2 family. In terms of assembly, forms homodimers, and heterodimers with BAX, BAD, BAK and Bcl-X(L). Heterodimerization with BAX requires intact BH1 and BH2 motifs, and is necessary for anti-apoptotic activity. Part of a complex composed of SEPTIN4 isoform ARTS, XIAP and BCL2, within the complex interacts (via BH3 domain) with SEPTIN4 isoform ARTS and XIAP, SEPTIN4 isoform ARTS acts as a scaffold protein and stabilizes the complex. Component of the complex, at least composed of LRPPRC, BECN1 and BCL2; the interactions prevent BECN1 from forming an autophagy-inducing complex with PIK3C3. Interacts with EI24. Also interacts with APAF1, BBC3, BCL2L1, BNIPL, MRPL41 and TP53BP2. Binding to FKBP8 seems to target BCL2 to the mitochondria and probably interferes with the binding of BCL2 to its targets. Interacts with BAG1 in an ATP-dependent manner. Interacts with RAF1 (the 'Ser-338' and 'Ser-339' phosphorylated form). Interacts (via the BH4 domain) with EGLN3; the interaction prevents the formation of the BAX-BCL2 complex and inhibits the anti-apoptotic activity of BCL2. Interacts with G0S2; this interaction also prevents the formation of the anti-apoptotic BAX-BCL2 complex. Interacts with RTL10/BOP. Interacts with the SCF(FBXO10) complex. Interacts (via the loop between motifs BH4 and BH3) with NLRP1 (via LRR repeats), but not with NLRP2, NLRP3, NLRP4, PYCARD, nor MEFV. Interacts with GIMAP3/IAN4, GIMAP4/IAN1 and GIMAP5/IAN5. Interacts with BCAP31. Interacts with IRF3; the interaction is inhibited by Sendai virus infection. Interacts with BECN1; thereby inhibiting autophagy in non-starvation conditions. Interacts with AMBRA1; thereby inhibiting autophagy. As to quaternary structure, (Microbial infection) Interacts with Toxoplasma gondii ROP17; the interaction probably promotes BCL2 phosphorylation and degradation. Post-translationally, phosphorylation/dephosphorylation on Ser-70 regulates anti-apoptotic activity. Growth factor-stimulated phosphorylation on Ser-70 by PKC is required for the anti-apoptosis activity and occurs during the G2/M phase of the cell cycle. In the absence of growth factors, BCL2 appears to be phosphorylated by other protein kinases such as ERKs and stress-activated kinases. Phosphorylated by MAPK8/JNK1 at Thr-69, Ser-70 and Ser-87, which stimulates starvation-induced autophagy. Dephosphorylated by protein phosphatase 2A (PP2A). In terms of processing, proteolytically cleaved by caspases during apoptosis. The cleaved protein, lacking the BH4 motif, has pro-apoptotic activity, causes the release of cytochrome c into the cytosol promoting further caspase activity. Monoubiquitinated by PRKN, leading to an increase in its stability. Ubiquitinated by SCF(FBXO10), leading to its degradation by the proteasome. Ubiquitinated by XIAP, leading to its degradation by the proteasome. In terms of tissue distribution, expressed in a variety of tissues.

It is found in the mitochondrion outer membrane. The protein resides in the nucleus membrane. It localises to the endoplasmic reticulum membrane. The protein localises to the cytoplasm. Suppresses apoptosis in a variety of cell systems including factor-dependent lymphohematopoietic and neural cells. Regulates cell death by controlling the mitochondrial membrane permeability. Appears to function in a feedback loop system with caspases. Inhibits caspase activity either by preventing the release of cytochrome c from the mitochondria and/or by binding to the apoptosis-activating factor (APAF-1). Also acts as an inhibitor of autophagy: interacts with BECN1 and AMBRA1 during non-starvation conditions and inhibits their autophagy function. May attenuate inflammation by impairing NLRP1-inflammasome activation, hence CASP1 activation and IL1B release. In Homo sapiens (Human), this protein is Apoptosis regulator Bcl-2 (BCL2).